The chain runs to 334 residues: Glycerol-3-phosphate dehydrogenase [NAD(P)+] (334 aa).

Residues S13, F14, and K108 each coordinate NADPH. 3 residues coordinate sn-glycerol 3-phosphate: K108, G137, and T139. Residue A141 coordinates NADPH. Sn-glycerol 3-phosphate contacts are provided by K193, D246, S256, R257, and N258. The active-site Proton acceptor is K193. R257 lines the NADPH pocket. NADPH contacts are provided by V281 and E283.

It belongs to the NAD-dependent glycerol-3-phosphate dehydrogenase family.

The protein localises to the cytoplasm. The catalysed reaction is sn-glycerol 3-phosphate + NAD(+) = dihydroxyacetone phosphate + NADH + H(+). The enzyme catalyses sn-glycerol 3-phosphate + NADP(+) = dihydroxyacetone phosphate + NADPH + H(+). It functions in the pathway membrane lipid metabolism; glycerophospholipid metabolism. Catalyzes the reduction of the glycolytic intermediate dihydroxyacetone phosphate (DHAP) to sn-glycerol 3-phosphate (G3P), the key precursor for phospholipid synthesis. The polypeptide is Glycerol-3-phosphate dehydrogenase [NAD(P)+] (Bartonella tribocorum (strain CIP 105476 / IBS 506)).